Reading from the N-terminus, the 174-residue chain is RNA pyrophosphohydrolase (174 aa).

Residues 6 to 149 (GYRPNVGIIL…KRDVYLGALK (144 aa)) enclose the Nudix hydrolase domain. A Nudix box motif is present at residues 38–59 (GGIKPGESPETAMYRELYEEVG).

Belongs to the Nudix hydrolase family. RppH subfamily. A divalent metal cation serves as cofactor.

Accelerates the degradation of transcripts by removing pyrophosphate from the 5'-end of triphosphorylated RNA, leading to a more labile monophosphorylated state that can stimulate subsequent ribonuclease cleavage. The chain is RNA pyrophosphohydrolase from Neisseria meningitidis serogroup C (strain 053442).